A 146-amino-acid chain; its full sequence is Hemoglobin cathodic subunit beta (146 aa).

One can recognise a Globin domain in the interval 2-146 (EWSSSERSTI…LIHALSRQYF (145 aa)). Heme b is bound by residues histidine 63 and histidine 92.

Belongs to the globin family. As to quaternary structure, heterotetramer of two alpha chains and two beta chains. As to expression, red blood cells.

Its function is as follows. Involved in oxygen transport from gills to the various peripheral tissues. The protein is Hemoglobin cathodic subunit beta of Gymnothorax unicolor (Brown moray).